Here is a 454-residue protein sequence, read N- to C-terminus: MRSDTREEISAALDAYHASLSRVLDLKCDALTTPELLACLQRLEVERRRQGAAEHALINQLAGQACEEELGGTLRTALANRLHITPGEASRRIAEAEDLGERRALTGEPLPAQLTATAAAQREGKIGREHIKEIQAFFKELSAAVDLGIREAAEAQLAELATSRRPDHLHGLATQLMDWLHPDGNFSDQERARKRGITMGKQEFDGMSRISGLLTPELRATIEAVLAKLAAPGACNPDDQTPLVDDTPDADAVRRDTRSQAQRNHDAFLAALRGLLASGELGQHKGLPVTIVVSTTLKELEAATGKGVTGGGSRVPMSDLIRMASHANHYLALFDGAKPLALYHTKRLASPAQRIMLYAKDRGCSRPGCDAPAYHSEVHHVTPWTTTHRTDINDLTLACGPDNRLVEKGWKTRKNAHGDTEWLPPPHLDHGQPRINRYHHPAKILCEQDDDEPH.

Positions 364 to 405 (CSRPGCDAPAYHSEVHHVTPWTTTHRTDINDLTLACGPDNRL) constitute an HNH domain.

Belongs to the Rv1128c/1148c/1588c/1702c/1945/3466 family.

This is an uncharacterized protein from Mycobacterium tuberculosis (strain ATCC 25618 / H37Rv).